Here is a 122-residue protein sequence, read N- to C-terminus: Large ribosomal subunit protein bL12 (122 aa).

Belongs to the bacterial ribosomal protein bL12 family. As to quaternary structure, homodimer. Part of the ribosomal stalk of the 50S ribosomal subunit. Forms a multimeric L10(L12)X complex, where L10 forms an elongated spine to which 2 to 4 L12 dimers bind in a sequential fashion. Binds GTP-bound translation factors.

In terms of biological role, forms part of the ribosomal stalk which helps the ribosome interact with GTP-bound translation factors. Is thus essential for accurate translation. The sequence is that of Large ribosomal subunit protein bL12 from Shewanella denitrificans (strain OS217 / ATCC BAA-1090 / DSM 15013).